A 273-amino-acid polypeptide reads, in one-letter code: Dermonecrotic toxin LdSicTox-alphaIB3ai (273 aa).

Residue His-5 is part of the active site. Mg(2+) is bound by residues Glu-25 and Asp-27. The active-site Nucleophile is His-41. 2 disulfides stabilise this stretch: Cys-45–Cys-51 and Cys-47–Cys-190. Asp-85 contributes to the Mg(2+) binding site.

It belongs to the arthropod phospholipase D family. Class II subfamily. The cofactor is Mg(2+). Expressed by the venom gland.

Its subcellular location is the secreted. The enzyme catalyses an N-(acyl)-sphingosylphosphocholine = an N-(acyl)-sphingosyl-1,3-cyclic phosphate + choline. It catalyses the reaction an N-(acyl)-sphingosylphosphoethanolamine = an N-(acyl)-sphingosyl-1,3-cyclic phosphate + ethanolamine. The catalysed reaction is a 1-acyl-sn-glycero-3-phosphocholine = a 1-acyl-sn-glycero-2,3-cyclic phosphate + choline. It carries out the reaction a 1-acyl-sn-glycero-3-phosphoethanolamine = a 1-acyl-sn-glycero-2,3-cyclic phosphate + ethanolamine. Dermonecrotic toxins cleave the phosphodiester linkage between the phosphate and headgroup of certain phospholipids (sphingolipid and lysolipid substrates), forming an alcohol (often choline) and a cyclic phosphate. This toxin acts on sphingomyelin (SM). It may also act on ceramide phosphoethanolamine (CPE), lysophosphatidylcholine (LPC) and lysophosphatidylethanolamine (LPE), but not on lysophosphatidylserine (LPS), and lysophosphatidylglycerol (LPG). It acts by transphosphatidylation, releasing exclusively cyclic phosphate products as second products. Induces dermonecrosis, hemolysis, increased vascular permeability, edema, inflammatory response, and platelet aggregation. This Loxosceles deserta (Desert recluse spider) protein is Dermonecrotic toxin LdSicTox-alphaIB3ai.